A 209-amino-acid chain; its full sequence is Virulence factors putative positive transcription regulator BvgA (209 aa).

The Response regulatory domain maps to Lys4–Met119. A 4-aspartylphosphate modification is found at Asp54. Residues Asp142–Asn207 form the HTH luxR-type domain. Residues Asn166–Thr185 constitute a DNA-binding region (H-T-H motif).

As to quaternary structure, homodimer. In terms of processing, phosphorylated by BvgS.

Its function is as follows. Member of the two-component regulatory system BvgS/BvgA. Activates the transcription of virulence genes. This is Virulence factors putative positive transcription regulator BvgA (bvgA) from Bordetella bronchiseptica (strain ATCC BAA-588 / NCTC 13252 / RB50) (Alcaligenes bronchisepticus).